Consider the following 435-residue polypeptide: Glutamyl-tRNA reductase (435 aa).

Substrate contacts are provided by residues 49–52 (TCNR), Ser114, 119–121 (EPQ), and Gln125. Cys50 functions as the Nucleophile in the catalytic mechanism. An NADP(+)-binding site is contributed by 204 to 209 (GAGETI).

This sequence belongs to the glutamyl-tRNA reductase family. Homodimer.

It catalyses the reaction (S)-4-amino-5-oxopentanoate + tRNA(Glu) + NADP(+) = L-glutamyl-tRNA(Glu) + NADPH + H(+). The protein operates within porphyrin-containing compound metabolism; protoporphyrin-IX biosynthesis; 5-aminolevulinate from L-glutamyl-tRNA(Glu): step 1/2. Its function is as follows. Catalyzes the NADPH-dependent reduction of glutamyl-tRNA(Glu) to glutamate 1-semialdehyde (GSA). This Actinobacillus succinogenes (strain ATCC 55618 / DSM 22257 / CCUG 43843 / 130Z) protein is Glutamyl-tRNA reductase.